The primary structure comprises 131 residues: Large ribosomal subunit protein bL17 (131 aa).

This sequence belongs to the bacterial ribosomal protein bL17 family. In terms of assembly, part of the 50S ribosomal subunit. Contacts protein L32.

The sequence is that of Large ribosomal subunit protein bL17 from Cupriavidus metallidurans (strain ATCC 43123 / DSM 2839 / NBRC 102507 / CH34) (Ralstonia metallidurans).